Reading from the N-terminus, the 159-residue chain is Cyclic pyranopterin monophosphate synthase (159 aa).

Substrate-binding positions include L76–H78 and M114–E115. D129 is a catalytic residue.

Belongs to the MoaC family. Homohexamer; trimer of dimers.

The enzyme catalyses (8S)-3',8-cyclo-7,8-dihydroguanosine 5'-triphosphate = cyclic pyranopterin phosphate + diphosphate. It functions in the pathway cofactor biosynthesis; molybdopterin biosynthesis. Its function is as follows. Catalyzes the conversion of (8S)-3',8-cyclo-7,8-dihydroguanosine 5'-triphosphate to cyclic pyranopterin monophosphate (cPMP). The chain is Cyclic pyranopterin monophosphate synthase from Psychromonas ingrahamii (strain DSM 17664 / CCUG 51855 / 37).